Here is a 296-residue protein sequence, read N- to C-terminus: Endonuclease 5 (296 aa).

An N-terminal signal peptide occupies residues 1-20; sequence MRLWIVSVLVLTHLVHGALC. Trp21 and His26 together coordinate a divalent metal cation. 21 to 26 serves as a coordination point for substrate; the sequence is WGKDGH. The cysteines at positions 30 and 62 are disulfide-linked. Residues Asp66 and His81 each coordinate a divalent metal cation. Substrate contacts are provided by residues 66-72, 81-84, and 91-96; these read DEIKKLS, HYVN, and NYEYCR. Disulfide bonds link Cys90-Cys243, Cys98-Cys108, and Cys223-Cys230. 2 residues coordinate substrate: Asn115 and Tyr133. An N-linked (GlcNAc...) asparagine glycan is attached at Asn115. N-linked (GlcNAc...) asparagine glycosylation occurs at Asn134. A divalent metal cation is bound by residues His144, Asp148, and His154. The substrate binding stretch occupies residues 144 to 193; sequence HYMGDVHQPLHTGFLGDLGGNTIIVNWYHNKSNLHHVWDNMIIDSALETY. Residue Asn173 is glycosylated (N-linked (GlcNAc...) asparagine). The a divalent metal cation site is built by His178 and Asp182. The N-linked (GlcNAc...) asparagine glycan is linked to Asn195. Residues 281–296 constitute a propeptide, removed in mature form; sequence ATLNRIFSAKPKLAGL.

This sequence belongs to the nuclease type I family. In terms of assembly, monomer. Requires Zn(2+) as cofactor.

The catalysed reaction is Endonucleolytic cleavage to 5'-phosphomononucleotide and 5'-phosphooligonucleotide end-products.. Functionally, hydrolyzes, with low efficiency, only single-stranded DNA and RNA without apparent specificity for bases. Endonuclease that recognizes and cleaves some mismatches with high efficiency, including heteroduplex double-stranded DNA; mostly efficient on T/G, A/G and G/G mismatches, less efficient for T/T and poorly efficient for C/C, A/A, T/C and A/C. The chain is Endonuclease 5 from Arabidopsis thaliana (Mouse-ear cress).